The sequence spans 342 residues: GTPase Obg (342 aa).

An Obg domain is found at 1-159 (MQFIDRAEIE…RHLRLELKLL (159 aa)). Positions 160 to 328 (AEVGIIGLPN…LLAKVWQQLE (169 aa)) constitute an OBG-type G domain. Residues 166–173 (GLPNAGKS), 191–195 (FTTLI), 213–216 (DIPG), 280–283 (NKID), and 309–311 (SAV) contribute to the GTP site. Mg(2+) contacts are provided by Ser-173 and Thr-193.

It belongs to the TRAFAC class OBG-HflX-like GTPase superfamily. OBG GTPase family. In terms of assembly, monomer. It depends on Mg(2+) as a cofactor.

The protein localises to the cytoplasm. Its function is as follows. An essential GTPase which binds GTP, GDP and possibly (p)ppGpp with moderate affinity, with high nucleotide exchange rates and a fairly low GTP hydrolysis rate. Plays a role in control of the cell cycle, stress response, ribosome biogenesis and in those bacteria that undergo differentiation, in morphogenesis control. This is GTPase Obg from Microcystis aeruginosa (strain NIES-843 / IAM M-2473).